The following is a 309-amino-acid chain: Glutaminase (309 aa).

Ser-64, Asn-114, Glu-160, Asn-167, Tyr-191, Tyr-243, and Val-261 together coordinate substrate.

It belongs to the glutaminase family. In terms of assembly, homotetramer.

The catalysed reaction is L-glutamine + H2O = L-glutamate + NH4(+). This chain is Glutaminase, found in Rhodopseudomonas palustris (strain BisB18).